A 273-amino-acid chain; its full sequence is MQHPTPDALHARLAARRFILAGPCALEDFDVAMETAHAVREAAEAAGLFAVFKSSWDKANRTSITSFRGPGLVRGMEWLARIREESGLPVVTDIHLPEQAAPVAEVADIIQIPAFLCRQTDLLVAAAATGRVVNVKKGQFVAPWDMRPAVEKLRAAGNERILLTERGTSFGYNNLVVDYRSIPTMQGFGVPVVFDATHSVQLPGGLGGSSGGERRHVPVLARAAVAAGVDGVFLECHPDPDKALCDGPNSWPLDRLPALLKELSALWSLEHVC.

Belongs to the KdsA family.

It is found in the cytoplasm. It catalyses the reaction D-arabinose 5-phosphate + phosphoenolpyruvate + H2O = 3-deoxy-alpha-D-manno-2-octulosonate-8-phosphate + phosphate. The protein operates within carbohydrate biosynthesis; 3-deoxy-D-manno-octulosonate biosynthesis; 3-deoxy-D-manno-octulosonate from D-ribulose 5-phosphate: step 2/3. It functions in the pathway bacterial outer membrane biogenesis; lipopolysaccharide biosynthesis. The chain is 2-dehydro-3-deoxyphosphooctonate aldolase from Nitratidesulfovibrio vulgaris (strain DP4) (Desulfovibrio vulgaris).